A 156-amino-acid polypeptide reads, in one-letter code: Small ribosomal subunit protein uS7c (156 aa).

It belongs to the universal ribosomal protein uS7 family. Part of the 30S ribosomal subunit.

It localises to the plastid. The protein resides in the chloroplast. One of the primary rRNA binding proteins, it binds directly to 16S rRNA where it nucleates assembly of the head domain of the 30S subunit. The sequence is that of Small ribosomal subunit protein uS7c (rps7) from Chara vulgaris (Common stonewort).